Consider the following 230-residue polypeptide: RING finger protein 141 (230 aa).

Glycine 2 is lipidated: N-myristoyl glycine. The RING-type zinc-finger motif lies at 155–192 (CCICMDGRADLILPCAHSFCQKCIDKWSDRHRNCPICR).

The protein localises to the membrane. Functionally, may be involved in spermatogenesis. This is RING finger protein 141 (RNF141) from Bos taurus (Bovine).